The sequence spans 33 residues: MSDINATRLPIWGIGCNPCVGDEVTALITRGEA.

The propeptide occupies 1 to 10 (MSDINATRLP). I11 carries the post-translational modification (3R,4R)-4,5-dihydroxyisoleucine; in form alpha-amanitin. I11 carries the post-translational modification (3R,4S)-4-hydroxyisoleucine; in form gamma-amanitin. Positions 11–18 (IWGIGCNP) form a cross-link, cyclopeptide (Ile-Pro). Positions 12-16 (WGIGC) form a cross-link, 2'-cysteinyl-6'-hydroxytryptophan sulfoxide (Trp-Cys). Residue P18 is modified to 4-hydroxyproline. Positions 19 to 33 (CVGDEVTALITRGEA) are excised as a propeptide.

This sequence belongs to the MSDIN fungal toxin family. Processed by the macrocyclase-peptidase enzyme POPB to yield a toxic cyclic decapeptide. POPB first removes 10 residues from the N-terminus. Conformational trapping of the remaining peptide forces the enzyme to release this intermediate rather than proceed to macrocyclization. The enzyme rebinds the remaining peptide in a different conformation and catalyzes macrocyclization of the N-terminal 8 residues.

Major toxin belonging to the bicyclic octapeptides amatoxins that acts by binding non-competitively to RNA polymerase II and greatly slowing the elongation of transcripts from target promoters. This Amanita pallidorosea protein is Alpha-amanitin proprotein.